A 224-amino-acid polypeptide reads, in one-letter code: MSSTKIHLTKAAFTISAPDIRRLPADSGIEVAFAGRSNAGKSSALNTLTNQRGLARISKTPGRTQLINVFEVAENRRLIDLPGYGFAQVPLAMKKKWQKALGEYLEKRQCLKGLVVLMDIRHPLKDLDMDLIQWAADSDLPVLALLTKCDKLSQGKRSSEVLAVKKALSSLNADIQVQAFSSLKYTGKEQADAIICQWLEQEAQEYELPEEDDFDDSDEFTEEE.

Residues 27–201 form the EngB-type G domain; the sequence is SGIEVAFAGR…DAIICQWLEQ (175 aa). GTP contacts are provided by residues 35–42, 62–66, 80–83, 147–150, and 180–182; these read GRSNAGKS, GRTQL, DLPG, TKCD, and FSS. Positions 42 and 64 each coordinate Mg(2+). Positions 205 to 224 are disordered; the sequence is EYELPEEDDFDDSDEFTEEE.

This sequence belongs to the TRAFAC class TrmE-Era-EngA-EngB-Septin-like GTPase superfamily. EngB GTPase family. It depends on Mg(2+) as a cofactor.

Necessary for normal cell division and for the maintenance of normal septation. The protein is Probable GTP-binding protein EngB of Colwellia psychrerythraea (strain 34H / ATCC BAA-681) (Vibrio psychroerythus).